The primary structure comprises 332 residues: Homeobox protein DLX-2 (332 aa).

Positions 19 to 28 (ASSTYHQHQQ) are enriched in polar residues. The segment at 19–83 (ASSTYHQHQQ…QHPAGGGGGG (65 aa)) is disordered. Residues 40–49 (NSNSSSSNSS) are compositionally biased toward low complexity. A compositionally biased stretch (polar residues) spans 55-75 (ESPTLPVSTATDSSYYTNQQH). The homeobox DNA-binding region spans 155 to 214 (VRKPRTIYSSFQLAALQRRFQKTQYLALPERAELAASLGLTQTQVKIWFQNRRSKFKKMW). 2 disordered regions span residues 219–272 (IPTE…SSPS) and 304–332 (PSQT…GTIF). Position 235 is a phosphoserine (Ser-235). The segment covering 253–266 (AGGGPGSGGGGAGS) has biased composition (gly residues). Over residues 310 to 320 (AHHHHHHHHHA) the composition is skewed to basic residues.

This sequence belongs to the distal-less homeobox family. As to quaternary structure, interacts (via homeobox DNA-binding domain) with POU4F2; this interaction enhances retinal ganglion cell (RGC) differentiation. Post-translationally, phosphorylated by serine/threonine kinases. In terms of tissue distribution, expressed only in neural and other ectodermal structures of the head: the brain, the vomeronasal organ, and the preameloblasts of the teeth. Primarily expressed in the germinal cells of the ventral forebrain in the midgestational embryo, and in both dorsal and ventral ventricular zones in late embryogenesis and early postnatal life. Expressed in the inner nuclear layer of the retina.

The protein resides in the nucleus. Acts as a transcriptional activator. Activates transcription of CGA/alpha-GSU, via binding to the downstream activin regulatory element (DARE) in the gene promoter. Plays a role in terminal differentiation of interneurons, such as amacrine and bipolar cells in the developing retina. Likely to play a regulatory role in the development of the ventral forebrain. May play a role in craniofacial patterning and morphogenesis. This chain is Homeobox protein DLX-2 (Dlx2), found in Mus musculus (Mouse).